A 162-amino-acid chain; its full sequence is Retinoic acid receptor responder protein 2 (162 aa).

An N-terminal signal peptide occupies residues 1–20; it reads MWQLLLPLALGLGTMGLGRA. 3 disulfide bridges follow: cysteine 77-cysteine 87, cysteine 98-cysteine 117, and cysteine 101-cysteine 135. Residues 156–162 constitute a propeptide that is removed on maturation; it reads FIKALSP.

In terms of processing, secreted in an inactive precursor form, prochemerin, which is proteolytically processed by a variety of extracellular proteases to generate forms with differing levels of bioactivity. For example, the removal of five amino acids results in chemerin-157, which exhibits the highest activity, while removal of six amino acids results in chemerin-156 which has slightly less activity. Some proteases are able to cleave at more than one site and chemerin forms may be sequentially processed by different enzymes to modulate activity levels. The coordinated expression and activity of chemerin-modifying enzymes is essential for regulating its bioactivation, inactivation and, consequently, biological function. Cathepsin G cleaves six C-terminal amino acids from prochemerin (chemerin-156), elastase is able to cleave five (chemerin-157), seven (chemerin-155) or ten (chemerin-152), plasmin cleaves four amino acids (chemerin-158), and tryptase cleaves four (chemerin-158) or seven (chemerin-155). Multiple cleavages might be required to fully activate chemerin, with an initial tryptase cleavage resulting in chemerin with low activity (chemerin-158), and a second cleavage by carboxypeptidase N or B producing highly active chemerin (chemerin-157).

The protein resides in the secreted. Functionally, adipocyte-secreted protein (adipokine) that regulates adipogenesis, metabolism and inflammation through activation of the chemokine-like receptor 1 (CMKLR1). Also acts as a ligand for CMKLR2. Can also bind to C-C chemokine receptor-like 2 (CCRL2), but with a lower affinity than it does to CMKLR1 or CMKLR2. Positively regulates adipocyte differentiation, modulates the expression of adipocyte genes involved in lipid and glucose metabolism and might play a role in angiogenesis, a process essential for the expansion of white adipose tissue. Also acts as a pro-inflammatory adipokine, causing an increase in secretion of pro-inflammatory and prodiabetic adipokines, which further impair adipose tissue metabolic function and have negative systemic effects including impaired insulin sensitivity, altered glucose and lipid metabolism, and a decrease in vascular function in other tissues. Can have both pro- and anti-inflammatory properties depending on the modality of enzymatic cleavage by different classes of proteases. Acts as a chemotactic factor for leukocyte populations expressing CMKLR1, particularly immature plasmacytoid dendritic cells, but also immature myeloid DCs, macrophages and natural killer cells. Exerts an anti-inflammatory role by preventing TNF/TNFA-induced VCAM1 expression and monocytes adhesion in vascular endothelial cells. The effect is mediated via inhibiting activation of NF-kappa-B and CRK/p38 through stimulation of AKT1/NOS3 signaling and nitric oxide production. Exhibits an antimicrobial function in the skin. The protein is Retinoic acid receptor responder protein 2 (RARRES2) of Bos taurus (Bovine).